The chain runs to 667 residues: Sorting nexin mvp1 (667 aa).

The segment at Ala221–Arg268 is disordered. The segment covering Leu224–Ser236 has biased composition (polar residues). A PX domain is found at Thr279–Phe398. A 1,2-diacyl-sn-glycero-3-phospho-(1D-myo-inositol-3-phosphate) contacts are provided by Arg320, Ser322, and Lys346. Residues Ala574 to Ala594 are disordered.

This sequence belongs to the sorting nexin family. As to quaternary structure, homodimer. Forms an autoinhibited tetramer consisting of 2 homodimers that self-interact, wherein the membrane-interacting BAR surfaces are sequestered and the PX lipid-binding sites are occluded. Interacts with Vps1.

The protein localises to the cytoplasm. The protein resides in the endosome membrane. Required for vacuolar protein sorting. Component of the retromer-mediated endosome-to-Golgi retrograde pathway. Required for efficient cargo export from the endosome, promoting Vps1-mediated fission of retromer-coated tubules that bud from the endosome. The protein is Sorting nexin mvp1 (mvp1) of Schizosaccharomyces pombe (strain 972 / ATCC 24843) (Fission yeast).